Here is a 299-residue protein sequence, read N- to C-terminus: Peroxisomal biogenesis factor 19 (299 aa).

A disordered region spans residues Met-1 to Leu-63. Ala-2 carries the post-translational modification N-acetylalanine. The tract at residues Ala-2 to Gly-56 is docking to the peroxisome membrane and binding to PEX3. The tract at residues Ala-2 to Met-91 is necessary for PEX19 function on peroxisome biogenesis. The segment covering Arg-16–Asp-27 has biased composition (acidic residues). Ser-35, Ser-54, and Ser-66 each carry phosphoserine. Thr-236 bears the Phosphothreonine mark. A Cysteine methyl ester modification is found at Cys-296. A lipid anchor (S-farnesyl cysteine) is attached at Cys-296. The propeptide at Leu-297–Met-299 is removed in mature form.

It belongs to the peroxin-19 family. Interacts with a broad range of peroxisomal membrane proteins, including PEX3, PEX10, PEX11A, PEX11B, PEX12, PEX13, PEX14 and PEX16, PXMP2/PMP22, PXMP4/PMP24, SLC25A17/PMP34, ABCD1/ALDP, ABCD2/ALDRP, and ABCD3/PMP70. Also interacts with the tumor suppressor CDKN2A/p19ARF. As to expression, ubiquitous.

It localises to the cytoplasm. The protein resides in the peroxisome membrane. Its function is as follows. Necessary for early peroxisomal biogenesis. Acts both as a cytosolic chaperone and as an import receptor for peroxisomal membrane proteins (PMPs). Binds and stabilizes newly synthesized PMPs in the cytoplasm by interacting with their hydrophobic membrane-spanning domains, and targets them to the peroxisome membrane by binding to the integral membrane protein PEX3. Excludes CDKN2A from the nucleus and prevents its interaction with MDM2, which results in active degradation of TP53. The protein is Peroxisomal biogenesis factor 19 (PEX19) of Cricetulus griseus (Chinese hamster).